A 312-amino-acid polypeptide reads, in one-letter code: DNA-directed RNA polymerase subunit alpha (312 aa).

The segment at 1–226 is alpha N-terminal domain (alpha-NTD); that stretch reads MIEFEKPIIT…EHLNLFTDLT (226 aa). The tract at residues 242–312 is alpha C-terminal domain (alpha-CTD); it reads NDEKVLDRTI…DLGLGLKNDK (71 aa).

Belongs to the RNA polymerase alpha chain family. Homodimer. The RNAP catalytic core consists of 2 alpha, 1 beta, 1 beta' and 1 omega subunit. When a sigma factor is associated with the core the holoenzyme is formed, which can initiate transcription.

It carries out the reaction RNA(n) + a ribonucleoside 5'-triphosphate = RNA(n+1) + diphosphate. Its function is as follows. DNA-dependent RNA polymerase catalyzes the transcription of DNA into RNA using the four ribonucleoside triphosphates as substrates. This chain is DNA-directed RNA polymerase subunit alpha, found in Streptococcus agalactiae serotype Ia (strain ATCC 27591 / A909 / CDC SS700).